Consider the following 317-residue polypeptide: Anamorsin homolog (317 aa).

Residues 1–192 are N-terminal SAM-like domain; the sequence is MREVLVVSES…ITGVRPNWKA (192 aa). The tract at residues 193-216 is linker; that stretch reads KGDRKSSSIHAAPIDGYISKAPDY. The [2Fe-2S] cluster site is built by cysteine 219, cysteine 226, cysteine 229, and cysteine 231. Residues 219 to 231 are fe-S binding site A; it reads CSTKPRACANCTC. [4Fe-4S] cluster-binding residues include cysteine 286, cysteine 289, cysteine 297, and cysteine 300. Short sequence motifs (cx2C motif) lie at residues 286–289 and 297–300; these read CGNC and CDSC. Residues 286 to 300 form a fe-S binding site B region; that stretch reads CGNCYLGDAFRCDSC.

It belongs to the anamorsin family. As to quaternary structure, monomer. Requires [2Fe-2S] cluster as cofactor. [4Fe-4S] cluster serves as cofactor.

Its subcellular location is the cytoplasm. The protein localises to the mitochondrion intermembrane space. Its function is as follows. Component of the cytosolic iron-sulfur (Fe-S) protein assembly (CIA) machinery. Required for the maturation of extramitochondrial Fe-S proteins. Part of an electron transfer chain functioning in an early step of cytosolic Fe-S biogenesis, facilitating the de novo assembly of a [4Fe-4S] cluster on the cytosolic Fe-S scaffold complex. Electrons are transferred from NADPH via a FAD- and FMN-containing diflavin oxidoreductase. Together with the diflavin oxidoreductase, also required for the assembly of the diferric tyrosyl radical cofactor of ribonucleotide reductase (RNR), probably by providing electrons for reduction during radical cofactor maturation in the catalytic small subunit. This is Anamorsin homolog from Theileria parva (East coast fever infection agent).